A 647-amino-acid chain; its full sequence is Acetyl-coenzyme A synthetase (647 aa).

Residues 190 to 193 and Thr-310 each bind CoA; that span reads RGGR. Residues 386–388, 410–415, Asp-499, and Arg-514 each bind ATP; these read GEP and DTWWQT. Ser-522 contributes to the CoA binding site. Residue Arg-525 coordinates ATP. 3 residues coordinate Mg(2+): Val-536, His-538, and Val-541. Arg-583 contacts CoA. Residue Lys-608 is modified to N6-acetyllysine.

This sequence belongs to the ATP-dependent AMP-binding enzyme family. The cofactor is Mg(2+). Post-translationally, acetylated. Deacetylation by the SIR2-homolog deacetylase activates the enzyme.

It carries out the reaction acetate + ATP + CoA = acetyl-CoA + AMP + diphosphate. Functionally, catalyzes the conversion of acetate into acetyl-CoA (AcCoA), an essential intermediate at the junction of anabolic and catabolic pathways. AcsA undergoes a two-step reaction. In the first half reaction, AcsA combines acetate with ATP to form acetyl-adenylate (AcAMP) intermediate. In the second half reaction, it can then transfer the acetyl group from AcAMP to the sulfhydryl group of CoA, forming the product AcCoA. This is Acetyl-coenzyme A synthetase from Xylella fastidiosa (strain Temecula1 / ATCC 700964).